Reading from the N-terminus, the 598-residue chain is Protein HIGH CHLOROPHYLL FLUORESCENCE PHENOTYPE 173, chloroplastic (598 aa).

The N-terminal 79 residues, 1-79 (MVGSIVGSNM…ITTKESEETV (79 aa)), are a transit peptide targeting the chloroplast. The tract at residues 42–106 (VIPRAQSSSS…PTLKLDDVNP (65 aa)) is disordered. Over residues 73–84 (KESEETVAKKLD) the composition is skewed to basic and acidic residues. Pro residues predominate over residues 87–97 (PPSPQSPPSPP).

The protein belongs to the NmrA-type oxidoreductase family. In terms of assembly, component of a high molecular weight complex containing psbA mRNA, OHP1, OHP2 and HCF244, and PSII core proteins D1/D2, HCF136 and HCF173. Interacts with LPE1.

Its subcellular location is the plastid. The protein localises to the chloroplast membrane. The protein resides in the chloroplast thylakoid membrane. It is found in the chloroplast stroma. Auxiliary factor required, together with HCF244, for the biogenesis of photosystem II (PSII), especially for the synthesis of the reaction center proteins (e.g. D1), via the regulation of the corresponding mRNA (e.g. psbA) translation initiation (ribosomal loading) and stabilization. This is Protein HIGH CHLOROPHYLL FLUORESCENCE PHENOTYPE 173, chloroplastic from Arabidopsis thaliana (Mouse-ear cress).